A 134-amino-acid polypeptide reads, in one-letter code: Acyl carrier protein SF2, chloroplastic (134 aa).

A chloroplast-targeting transit peptide spans 1–51 (MSTTFCSSVSMQATSLAATTRISFQKPALVSTTNLSFNLRRSIPTRFSISC). Residues 55 to 130 (PETVEKVSKI…EAAELIEELV (76 aa)) enclose the Carrier domain. An O-(pantetheine 4'-phosphoryl)serine modification is found at Ser90.

It belongs to the acyl carrier protein (ACP) family. In terms of processing, 4'-phosphopantetheine is transferred from CoA to a specific serine of apo-ACP by acpS. This modification is essential for activity because fatty acids are bound in thioester linkage to the sulfhydryl of the prosthetic group.

It localises to the plastid. The protein resides in the chloroplast. It participates in lipid metabolism; fatty acid biosynthesis. In terms of biological role, carrier of the growing fatty acid chain in fatty acid biosynthesis. This Brassica campestris (Field mustard) protein is Acyl carrier protein SF2, chloroplastic (Acl1.1).